We begin with the raw amino-acid sequence, 316 residues long: uncharacterized protein (316 aa).

The disordered stretch occupies residues 285-316 (APEGDLGDIIEVDPSEPRSDPYRRLRTPPPGG). Over residues 289–298 (DLGDIIEVDP) the composition is skewed to acidic residues.

Functionally, possibly necessary for replication. This is an uncharacterized protein from Halobacterium salinarum (Halobacterium halobium).